Consider the following 424-residue polypeptide: Deoxyguanosinetriphosphate triphosphohydrolase-like protein (424 aa).

Positions 1–24 (MYPYSDADAFRRHPERAKSSQLRT) are disordered. Residues 8–18 (DAFRRHPERAK) are compositionally biased toward basic and acidic residues. Residues 67-217 (RLTHSLEVAQ…MDFSDDIAYS (151 aa)) form the HD domain.

The protein belongs to the dGTPase family. Type 2 subfamily.

The protein is Deoxyguanosinetriphosphate triphosphohydrolase-like protein of Corynebacterium glutamicum (strain R).